A 216-amino-acid polypeptide reads, in one-letter code: Fibroblast growth factor 17 (216 aa).

Positions 1–22 are cleaved as a signal peptide; the sequence is MGAARLLPNLTLCLQLLILCCQ. The N-linked (GlcNAc...) asparagine glycan is linked to Asn137. The interval 195–216 is disordered; the sequence is FEFVGSAPTRRTKRTRRPQSQT. Basic residues predominate over residues 204–216; the sequence is RRTKRTRRPQSQT.

The protein belongs to the heparin-binding growth factors family. As to quaternary structure, interacts with FGFR3 and FGFR4.

It localises to the secreted. Its function is as follows. Plays an important role in the regulation of embryonic development and as signaling molecule in the induction and patterning of the embryonic brain. Required for normal brain development. The chain is Fibroblast growth factor 17 (Fgf17) from Mus musculus (Mouse).